We begin with the raw amino-acid sequence, 217 residues long: Somatotropin (217 aa).

A signal peptide spans 1–26; sequence MMAAGPRTSLLLAFALLCLPWTQVVG. H46 provides a ligand contact to Zn(2+). An intrachain disulfide couples C79 to C190. A Phosphoserine modification is found at S132. E199 is a Zn(2+) binding site. The cysteines at positions 207 and 215 are disulfide-linked.

The protein belongs to the somatotropin/prolactin family.

The protein localises to the secreted. Plays an important role in growth control. Its major role in stimulating body growth is to stimulate the liver and other tissues to secrete IGF1. It stimulates both the differentiation and proliferation of myoblasts. It also stimulates amino acid uptake and protein synthesis in muscle and other tissues. This chain is Somatotropin (GH1), found in Bos mutus grunniens (Wild yak).